Reading from the N-terminus, the 250-residue chain is 2,5-dichloro-2,5-cyclohexadiene-1,4-diol dehydrogenase (250 aa).

Position 9–34 (9–34 (IIVTGGGSGIGRATVELLVASGANVA)) interacts with NAD(+). Ser141 lines the substrate pocket. The Proton acceptor role is filled by Tyr154.

Belongs to the short-chain dehydrogenases/reductases (SDR) family.

The enzyme catalyses 2,5-dichlorocyclohexa-2,5-dien-1,4-diol + NAD(+) = 2,5-dichlorohydroquinone + NADH + H(+). The protein operates within xenobiotic degradation; gamma-hexachlorocyclohexane degradation. Its function is as follows. Catalyzes the dehydrogenation of 2,5-dichloro-2,5-cyclohexadiene-1,4-diol (2,5-DDOL) to 2,5-dichlorohydroquinone (2,5-DCHQ), a step in the degradation of gamma-hexachlorocyclohexane (gamma-HCH or lindane). The sequence is that of 2,5-dichloro-2,5-cyclohexadiene-1,4-diol dehydrogenase from Sphingobium indicum (strain DSM 16412 / CCM 7286 / MTCC 6364 / B90A).